Here is a 485-residue protein sequence, read N- to C-terminus: Aspartyl/glutamyl-tRNA(Asn/Gln) amidotransferase subunit B (485 aa).

The protein belongs to the GatB/GatE family. GatB subfamily. Heterotrimer of A, B and C subunits.

It catalyses the reaction L-glutamyl-tRNA(Gln) + L-glutamine + ATP + H2O = L-glutaminyl-tRNA(Gln) + L-glutamate + ADP + phosphate + H(+). The catalysed reaction is L-aspartyl-tRNA(Asn) + L-glutamine + ATP + H2O = L-asparaginyl-tRNA(Asn) + L-glutamate + ADP + phosphate + 2 H(+). Allows the formation of correctly charged Asn-tRNA(Asn) or Gln-tRNA(Gln) through the transamidation of misacylated Asp-tRNA(Asn) or Glu-tRNA(Gln) in organisms which lack either or both of asparaginyl-tRNA or glutaminyl-tRNA synthetases. The reaction takes place in the presence of glutamine and ATP through an activated phospho-Asp-tRNA(Asn) or phospho-Glu-tRNA(Gln). In Anaplasma marginale (strain Florida), this protein is Aspartyl/glutamyl-tRNA(Asn/Gln) amidotransferase subunit B.